The sequence spans 266 residues: 2-hydroxyisocaproyl-CoA dehydratase activator (266 aa).

ATP is bound by residues 10-14 and 102-104; these read STASK and GQD. Position 125 (Cys125) interacts with [4Fe-4S] cluster. Asp134 lines the ATP pocket. [4Fe-4S] cluster is bound at residue Cys164. ATP-binding residues include Gly215 and Gln241.

It belongs to the HadI activator family. As to quaternary structure, homodimer. Requires [4Fe-4S] cluster as cofactor.

Its function is as follows. Involved in the reductive branch of L-leucine fermentation. Required for the activation of (R)-2-hydroxyisocaproyl-CoA dehydratase. The reduced activator transfers one electron to the dehydratase concomitant with hydrolysis of ATP. This protein is extremely sensitive towards oxygen. This Clostridioides difficile (Peptoclostridium difficile) protein is 2-hydroxyisocaproyl-CoA dehydratase activator.